The chain runs to 428 residues: Histidine--tRNA ligase (428 aa).

It belongs to the class-II aminoacyl-tRNA synthetase family. As to quaternary structure, homodimer.

It is found in the cytoplasm. It catalyses the reaction tRNA(His) + L-histidine + ATP = L-histidyl-tRNA(His) + AMP + diphosphate + H(+). The polypeptide is Histidine--tRNA ligase (Staphylococcus carnosus (strain TM300)).